Consider the following 2958-residue polypeptide: Protein CSF1 (2958 aa).

Topologically, residues 1–17 are cytoplasmic; that stretch reads MEAISQLRGVPLTHQKD. Residues 18–38 form a helical; Signal-anchor for type II membrane protein membrane-spanning segment; it reads FSWVFLVDWILTVVVCLTMIF. At 39–2958 the chain is on the extracellular side; sequence YMGRIYAYLV…QYVKILDDTH (2920 aa). Asn82, Asn117, Asn144, Asn271, Asn478, Asn530, Asn816, Asn821, Asn839, and Asn892 each carry an N-linked (GlcNAc...) asparagine glycan. Positions 813–834 are disordered; it reads GYQNSSLKNESEDKGPMKRSDL. The segment covering 821–834 has biased composition (basic and acidic residues); sequence NESEDKGPMKRSDL. The interval 1175 to 1196 is disordered; that stretch reads MEPSRASFSEDDNDEEADPSSF. A compositionally biased stretch (acidic residues) spans 1183–1192; the sequence is SEDDNDEEAD. Residues Asn1309, Asn1368, Asn1453, Asn1785, Asn1921, Asn2130, Asn2146, Asn2280, Asn2337, Asn2520, Asn2578, Asn2719, and Asn2869 are each glycosylated (N-linked (GlcNAc...) asparagine).

This sequence belongs to the CSF1 family. As to quaternary structure, interacts with MCD4; CSF1 channels phosphatidylethanolamine to MCD4 in the endoplasmic reticulum at contact sites to support GPI anchor biosynthesis.

The protein resides in the cell membrane. It localises to the endoplasmic reticulum membrane. Its subcellular location is the mitochondrion membrane. Its function is as follows. Tube-forming lipid transport protein which provides phosphatidylethanolamine for glycosylphosphatidylinositol (GPI) anchor synthesis in the endoplasmic reticulum. Required for the glucose and other nutrients uptake at low temperature. This is Protein CSF1 from Saccharomyces cerevisiae (strain ATCC 204508 / S288c) (Baker's yeast).